We begin with the raw amino-acid sequence, 43 residues long: Phi-Lf prophage-derived putative minor coat protein (43 aa).

In Xanthomonas campestris pv. campestris (strain ATCC 33913 / DSM 3586 / NCPPB 528 / LMG 568 / P 25), this protein is Phi-Lf prophage-derived putative minor coat protein (gVII-1).